Consider the following 547-residue polypeptide: Nuclear speckle splicing regulatory protein 1 (547 aa).

Residues 25–51 are disordered; it reads KPSVFGNDSDDDEASVSESLQREAAKK. Serine 27 and serine 33 each carry phosphoserine. A coiled-coil region spans residues 103 to 177; it reads IHNLLKAVEI…EARLDVTKQK (75 aa). The segment at 105 to 169 is necessary for alternative splicing activity; it reads NLLKAVEIRK…REKRAAALEA (65 aa). Residues 188–523 are disordered; it reads NQAVGEEAVP…KRSNEETVMS (336 aa). Glycyl lysine isopeptide (Lys-Gly) (interchain with G-Cter in SUMO2) cross-links involve residues lysine 198 and lysine 209. Positions 200 to 217 are enriched in basic and acidic residues; that stretch reads SFREARTVIKEEKLRGYP. Residues 223–232 show a composition bias toward polar residues; sequence ENRPQQNCAL. Residues 237-254 show a composition bias toward acidic residues; sequence EEAEENPDADSDSEESCD. Phosphoserine is present on residues serine 247 and serine 252. The segment covering 255–269 has biased composition (basic and acidic residues); the sequence is DGERGDHKVKSRGEE. N6-acetyllysine is present on lysine 276. The segment covering 277 to 287 has biased composition (basic residues); the sequence is YLKHHKNHTHS. Residue lysine 279 forms a Glycyl lysine isopeptide (Lys-Gly) (interchain with G-Cter in SUMO2) linkage. Residues 308 to 339 are compositionally biased toward basic and acidic residues; it reads RGHEHKGGQHQDRQSRDQESCHKDRSHREEKS. Positions 340–355 are enriched in basic residues; sequence SHRHREASHKDHHWKR. Basic and acidic residues-rich tracts occupy residues 356–480 and 490–506; these read HEHE…KPPR and RLTE…ERPP. A coiled-coil region spans residues 376–417; the sequence is KREKYSSREQEKDRQWNDHDRYSEKEKKGKEKEEHRKARRER. Serine 447 bears the Phosphoserine mark.

This sequence belongs to the NSRP1 family. In terms of assembly, interacts (via C-terminus) with SRSF1. Interacts (via C-terminus) with SRSF2.

It is found in the nucleus. Its subcellular location is the nucleus speckle. Functionally, RNA-binding protein that mediates pre-mRNA alternative splicing regulation. The chain is Nuclear speckle splicing regulatory protein 1 (Nsrp1) from Rattus norvegicus (Rat).